The primary structure comprises 541 residues: uncharacterized protein (541 aa).

12 helical membrane passes run 99–119, 131–153, 165–185, 187–207, 224–244, 256–276, 325–345, 367–387, 409–429, 439–459, 472–494, and 508–528; these read WIVV…SSVY, GVSI…FGSL, FVVY…GGCA, NIWT…TPLS, YVLP…PIIG, WVFW…FFFM, LLIT…VYII, IGLS…CTPI, LYPL…FAWT, WIVP…VFFV, AASA…SLVG, and SLLG…FIYG.

Belongs to the major facilitator superfamily. CAR1 family.

It localises to the membrane. This is an uncharacterized protein from Schizosaccharomyces pombe (strain 972 / ATCC 24843) (Fission yeast).